The following is a 672-amino-acid chain: Forkhead box protein O3 (672 aa).

2 disordered regions span residues 1 to 85 (MAEA…GVSS) and 110 to 152 (GPAS…CSSR). Phosphoserine is present on Ser-30. Thr-32 is modified (phosphothreonine). Lys-46 carries the post-translational modification N6-methyllysine. The segment covering 57–68 (IPEEDDDEDDED) has biased composition (acidic residues). Positions 80–108 (GGGVSSTLGSGLLLEDSAMLLAPGGQDLG) are required for mitochondrial import. A compositionally biased stretch (low complexity) spans 110-129 (GPASAAGALSGGTPTQLQPQ). Lys-148 carries the post-translational modification N6-methyllysine. Positions 156–250 (WGNLSYADLI…KSGKAPRRRA (95 aa)) form a DNA-binding region, fork-head. Thr-178 is modified (phosphothreonine). Residues Ser-208 and Ser-214 each carry the phosphoserine modification. Lys-229 carries the N6-methyllysine modification. A disordered region spans residues 230 to 301 (SSWWIINPDG…GSPTSRSSDE (72 aa)). The residue at position 241 (Lys-241) is an N6-acetyllysine. Positions 241–258 (KSGKAPRRRAVSMDNSNK) match the Nuclear localization signal motif. Residue Ser-252 is modified to Phosphoserine. Positions 260-271 (TKSRGRAAKKKA) are enriched in basic residues. N6-methyllysine occurs at positions 261 and 270. A phosphoserine mark is found at Ser-279 and Ser-283. The segment covering 282 to 297 (DSPSQLSKWPGSPTSR) has biased composition (polar residues). At Lys-289 the chain carries N6-methyllysine. Residue Ser-293 is modified to Phosphoserine. Ser-298 is subject to Phosphoserine; by CaMK2A. The tract at residues 299 to 672 (SDELDAWTDF…QASSQSWVPG (374 aa)) is mediates interaction with CHUK/IKKA and IKBKB/IKKB. At Ser-310 the chain carries Phosphoserine. Residue Ser-314 is modified to Phosphoserine; by SGK1. Ser-398 and Ser-412 each carry phosphoserine; by AMPK. Disordered regions lie at residues 399–441 (QPSP…SLNS) and 535–583 (HQHQ…QTLS). 2 stretches are compositionally biased toward polar residues: residues 409–441 (RGSSFPYTAKSSGLGSPTGSFNSTVFGPSSLNS) and 548–577 (ALSNSVSNMGLSDSSSLGSAKHQQQSPASQ). An N6-methyllysine modification is found at Lys-418. Ser-420 carries the phosphoserine modification. Ser-550 is subject to Phosphoserine; by MAPKAPK5. Ser-554 carries the phosphoserine; by AMPK and MAPKAPK5 modification. Phosphoserine; by AMPK occurs at positions 587 and 625. Ser-643 is modified (phosphoserine; by IKKB).

As to quaternary structure, upon metabolic stress, forms a complex composed of FOXO3, SIRT3 and mitochondrial RNA polymerase POLRMT; the complex is recruited to mtDNA in a SIRT3-dependent manner. Also forms a complex composed of FOXO3, SIRT3, TFAM and POLRMT. Interacts with SIRT2; the interaction occurs independently of SIRT2 deacetylase activity. Interacts with YWHAB/14-3-3-beta and YWHAZ/14-3-3-zeta, which are required for cytosolic sequestration. Upon oxidative stress, interacts with STK4/MST1, which disrupts interaction with YWHAB/14-3-3-beta and leads to nuclear translocation. Interacts with PIM1. Interacts with DDIT3/CHOP. Interacts (deacetylated form) with SKP2. Interacts with CHUK and IKBKB. Interacts with CAMK2A, CAMK2B and calcineurin A. Interacts with NUPR1; this interaction represses FOXO3 transactivation. Deacetylation by SIRT1 or SIRT2 stimulates interaction of FOXO3 with SKP2 and facilitates SCF(SKP2)-mediated FOXO3 ubiquitination and proteasomal degradation. Deacetylation by SIRT2 stimulates FOXO3-mediated transcriptional activity in response to oxidative stress. Deacetylated by SIRT3. Deacetylation by SIRT3 stimulates FOXO3-mediated mtDNA transcriptional activity in response to metabolic stress. In terms of processing, in the presence of survival factors such as IGF1, phosphorylated on Thr-32 and Ser-252 by AKT1/PKB. This phosphorylated form then interacts with 14-3-3 proteins and is retained in the cytoplasm. Survival factor withdrawal induces dephosphorylation and promotes translocation to the nucleus where the dephosphorylated protein induces transcription of target genes and triggers apoptosis. Although AKT1/PKB doesn't appear to phosphorylate Ser-314 directly, it may activate other kinases that trigger phosphorylation at this residue. Phosphorylated by STK4/MST1 on Ser-208 upon oxidative stress, which leads to dissociation from YWHAB/14-3-3-beta and nuclear translocation. Phosphorylated by PIM1. Phosphorylation by AMPK leads to the activation of transcriptional activity without affecting subcellular localization. Phosphorylated by AMPK on Ser-30 in response to metabolic stress which mediates FOXO3 mitochondrial translocation. Phosphorylation by MAPKAPK5 promotes nuclear localization and DNA-binding, leading to induction of miR-34b and miR-34c expression, 2 post-transcriptional regulators of MYC that bind to the 3'UTR of MYC transcript and prevent its translation. Phosphorylated by CHUK/IKKA and IKBKB/IKKB. TNF-induced inactivation of FOXO3 requires its phosphorylation at Ser-643 by IKBKB/IKKB which promotes FOXO3 retention in the cytoplasm, polyubiquitination and ubiquitin-mediated proteasomal degradation. May be dephosphorylated by calcineurin A on Ser-298 which abolishes FOXO3 transcriptional activity. Phosphorylation at Ser-252 promotes its degradation by the proteasome. Dephosphorylation at Ser-252 by protein phosphatase 2A (PPP2CA) promotes its stabilization; interaction with PPP2CA is enhanced by AMBRA1. Post-translationally, heavily methylated by SET9 which decreases stability, while moderately increasing transcriptional activity. The main methylation site is Lys-270. Methylation doesn't affect subcellular location. Polyubiquitinated. Ubiquitinated by a SCF complex containing SKP2, leading to proteasomal degradation. In terms of processing, the N-terminus is cleaved following import into the mitochondrion. As to expression, expressed in white and brown adipose tissues (at protein level). Expressed in liver, kidney, lung and colon (at protein level). Expressed in skeletal muscles (at protein level).

Its subcellular location is the cytoplasm. It localises to the cytosol. The protein localises to the nucleus. It is found in the mitochondrion matrix. The protein resides in the mitochondrion outer membrane. Its function is as follows. Transcriptional activator that recognizes and binds to the DNA sequence 5'-[AG]TAAA[TC]A-3' and regulates different processes, such as apoptosis and autophagy. Acts as a positive regulator of autophagy in skeletal muscle: in starved cells, enters the nucleus following dephosphorylation and binds the promoters of autophagy genes, such as GABARAP1L, MAP1LC3B and ATG12, thereby activating their expression, resulting in proteolysis of skeletal muscle proteins. Triggers apoptosis in the absence of survival factors, including neuronal cell death upon oxidative stress. Participates in post-transcriptional regulation of MYC: following phosphorylation by MAPKAPK5, promotes induction of miR-34b and miR-34c expression, 2 post-transcriptional regulators of MYC that bind to the 3'UTR of MYC transcript and prevent its translation. In response to metabolic stress, translocates into the mitochondria where it promotes mtDNA transcription. Also acts as a key regulator of chondrogenic commitment of skeletal progenitor cells in response to lipid availability: when lipids levels are low, translocates to the nucleus and promotes expression of SOX9, which induces chondrogenic commitment and suppresses fatty acid oxidation. Also acts as a key regulator of regulatory T-cells (Treg) differentiation by activating expression of FOXP3. The polypeptide is Forkhead box protein O3 (Mus musculus (Mouse)).